A 126-amino-acid chain; its full sequence is Holo-[acyl-carrier-protein] synthase (126 aa).

D9 and E58 together coordinate Mg(2+).

Belongs to the P-Pant transferase superfamily. AcpS family. It depends on Mg(2+) as a cofactor.

The protein localises to the cytoplasm. It catalyses the reaction apo-[ACP] + CoA = holo-[ACP] + adenosine 3',5'-bisphosphate + H(+). Its function is as follows. Transfers the 4'-phosphopantetheine moiety from coenzyme A to a Ser of acyl-carrier-protein. The chain is Holo-[acyl-carrier-protein] synthase from Edwardsiella ictaluri (strain 93-146).